The sequence spans 146 residues: Transcriptional regulator MraZ (146 aa).

SpoVT-AbrB domains follow at residues 7-54 (HVTN…GPEL) and 83-126 (GVYV…DPQA).

This sequence belongs to the MraZ family. Forms oligomers.

The protein resides in the cytoplasm. The protein localises to the nucleoid. The chain is Transcriptional regulator MraZ from Rhizobium meliloti (strain 1021) (Ensifer meliloti).